Reading from the N-terminus, the 150-residue chain is Deoxyuridine 5'-triphosphate nucleotidohydrolase (150 aa).

Residues 68 to 70 (RSG), N81, 85 to 87 (TID), and K95 each bind substrate.

The protein belongs to the dUTPase family. Mg(2+) serves as cofactor.

The enzyme catalyses dUTP + H2O = dUMP + diphosphate + H(+). Its pathway is pyrimidine metabolism; dUMP biosynthesis; dUMP from dCTP (dUTP route): step 2/2. In terms of biological role, this enzyme is involved in nucleotide metabolism: it produces dUMP, the immediate precursor of thymidine nucleotides and it decreases the intracellular concentration of dUTP so that uracil cannot be incorporated into DNA. The sequence is that of Deoxyuridine 5'-triphosphate nucleotidohydrolase from Rickettsia bellii (strain OSU 85-389).